Reading from the N-terminus, the 378-residue chain is Carbazole 1,9a-dioxygenase, terminal oxygenase component CarAa (378 aa).

Positions 29-135 (WYPVRLASEI…VEEAKGLIFV (107 aa)) constitute a Rieske domain. Positions 69, 71, 90, and 93 each coordinate [2Fe-2S] cluster.

Homotrimer. Carbazole 1,9a-dioxygenase complex consists of a terminal oxygenase component CarAa, a ferredoxin reductase component fdr and a ferredoxin component CarAc. Requires [2Fe-2S] cluster as cofactor.

The catalysed reaction is 9H-carbazole + NADH + O2 + H(+) = 2'-aminobiphenyl-2,3-diol + NAD(+). The enzyme catalyses 9H-carbazole + NADPH + O2 + H(+) = 2'-aminobiphenyl-2,3-diol + NADP(+). Part of the multicomponent carbazole 1,9a-dioxygenase (CARDO), that converts carbazole (CAR) into 2-aminobiphenyl-2,3-diol. Catalyzes the dioxygenation at the angular (C-9a) and adjacent (C-1) positions of carbazole to yield a highly unstable cis-hydrodiol intermediate which is spontaneously converted to 2-aminobiphenyl-2,3-diol. This chain is Carbazole 1,9a-dioxygenase, terminal oxygenase component CarAa (carAa), found in Sphingomonas sp.